Here is a 447-residue protein sequence, read N- to C-terminus: MKLKKTLTYQHHAYSFLSDNTNEVLENPKEILFVKTPLNEKYAPLIAEKNLAILDFNELKNYFDFKIKIVGITGTNGKTTTASLMYSLLLDLNKKTALLGTRGFFIDDKHIKEKGLTTPTLLELYSDLEEAIRLKCEYFIMEVSSHAIVQKRIAGLDFALKILTNITSDHLDFHQNIENYRDAKNSFFKDEGLKVINRDETNALFNPINARTYALDKKAHLNVQAFSLNPSISASLCYQHDLRDPNLKETALIHSPLLGRYNLYNILAGVLGVKLLTQLPLETIAPLLENFYGVKGRLEIVHSKPLVVVDFAHTTDGMQQVFESFKNQKITALFGAGGDRDKTKRPKMGAIASCYAHQIILTSDNPRSENEEDIIKDILKGINNSSKVIVEKDRKKAILNALENLKDDEVLLILGKGDENIQIFKDKTIFFSDQEVVKDYYLNLKQG.

UDP-N-acetyl-alpha-D-muramoyl-L-alanyl-D-glutamate is bound at residue Thr21. 74-80 (GTNGKTT) contributes to the ATP binding site. Residues 117 to 118 (TT), Ser144, Gln150, and Arg152 each bind UDP-N-acetyl-alpha-D-muramoyl-L-alanyl-D-glutamate. N6-carboxylysine is present on Lys184. Meso-2,6-diaminopimelate contacts are provided by residues Arg340, 364 to 367 (DNPR), Gly415, and Glu419. The short motif at 364–367 (DNPR) is the Meso-diaminopimelate recognition motif element.

Belongs to the MurCDEF family. MurE subfamily. Requires Mg(2+) as cofactor. Carboxylation is probably crucial for Mg(2+) binding and, consequently, for the gamma-phosphate positioning of ATP.

The protein localises to the cytoplasm. The enzyme catalyses UDP-N-acetyl-alpha-D-muramoyl-L-alanyl-D-glutamate + meso-2,6-diaminopimelate + ATP = UDP-N-acetyl-alpha-D-muramoyl-L-alanyl-gamma-D-glutamyl-meso-2,6-diaminopimelate + ADP + phosphate + H(+). It functions in the pathway cell wall biogenesis; peptidoglycan biosynthesis. Catalyzes the addition of meso-diaminopimelic acid to the nucleotide precursor UDP-N-acetylmuramoyl-L-alanyl-D-glutamate (UMAG) in the biosynthesis of bacterial cell-wall peptidoglycan. The protein is UDP-N-acetylmuramoyl-L-alanyl-D-glutamate--2,6-diaminopimelate ligase of Helicobacter pylori (strain J99 / ATCC 700824) (Campylobacter pylori J99).